The chain runs to 243 residues: uncharacterized protein (243 aa).

The Bipartite nuclear localization signal signature appears at 207-224; sequence KKTSISGYKTLDVKRKFV.

This is an uncharacterized protein from Acheta domesticus (House cricket).